The sequence spans 502 residues: Glycerol kinase (502 aa).

Thr-12 lines the ADP pocket. ATP contacts are provided by Thr-12, Thr-13, and Ser-14. Sn-glycerol 3-phosphate is bound at residue Thr-12. Residue Arg-16 coordinates ADP. Residues Arg-82, Glu-83, Tyr-134, and Asp-243 each contribute to the sn-glycerol 3-phosphate site. The glycerol site is built by Arg-82, Glu-83, Tyr-134, Asp-243, and Gln-244. 2 residues coordinate ADP: Thr-265 and Gly-308. ATP contacts are provided by Thr-265, Gly-308, Gln-312, and Gly-412. Position 412 (Gly-412) interacts with ADP.

The protein belongs to the FGGY kinase family.

The catalysed reaction is glycerol + ATP = sn-glycerol 3-phosphate + ADP + H(+). It functions in the pathway polyol metabolism; glycerol degradation via glycerol kinase pathway; sn-glycerol 3-phosphate from glycerol: step 1/1. Its activity is regulated as follows. Inhibited by fructose 1,6-bisphosphate (FBP). Its function is as follows. Key enzyme in the regulation of glycerol uptake and metabolism. Catalyzes the phosphorylation of glycerol to yield sn-glycerol 3-phosphate. The polypeptide is Glycerol kinase (Methylobacterium nodulans (strain LMG 21967 / CNCM I-2342 / ORS 2060)).